The following is a 103-amino-acid chain: Phosphoribosyl-ATP pyrophosphatase (103 aa).

Belongs to the PRA-PH family.

The protein resides in the cytoplasm. It carries out the reaction 1-(5-phospho-beta-D-ribosyl)-ATP + H2O = 1-(5-phospho-beta-D-ribosyl)-5'-AMP + diphosphate + H(+). It participates in amino-acid biosynthesis; L-histidine biosynthesis; L-histidine from 5-phospho-alpha-D-ribose 1-diphosphate: step 2/9. This chain is Phosphoribosyl-ATP pyrophosphatase, found in Listeria monocytogenes serotype 4b (strain CLIP80459).